Consider the following 249-residue polypeptide: Probable transcriptional regulatory protein Psyc_0938 (249 aa).

Belongs to the TACO1 family.

Its subcellular location is the cytoplasm. In Psychrobacter arcticus (strain DSM 17307 / VKM B-2377 / 273-4), this protein is Probable transcriptional regulatory protein Psyc_0938.